A 161-amino-acid chain; its full sequence is Fatty acid-binding protein homolog 2 (161 aa).

The first 19 residues, 1–19 (MSSKFLILLAFCGATLVAA), serve as a signal peptide directing secretion.

Belongs to the calycin superfamily. Fatty-acid binding protein (FABP) family.

It is found in the secreted. Functionally, may play a role in sequestering potentially toxic fatty acids and their peroxidation products, or it may be involved in the maintenance of the impermeable lipid layer of the eggshell. This Caenorhabditis elegans protein is Fatty acid-binding protein homolog 2 (lbp-2).